The sequence spans 236 residues: Hydroxyacylglutathione hydrolase (236 aa).

Zn(2+) contacts are provided by histidine 52, histidine 54, aspartate 56, histidine 57, histidine 108, aspartate 125, and histidine 163.

Belongs to the metallo-beta-lactamase superfamily. Glyoxalase II family. As to quaternary structure, monomer. Zn(2+) serves as cofactor.

The enzyme catalyses an S-(2-hydroxyacyl)glutathione + H2O = a 2-hydroxy carboxylate + glutathione + H(+). Its pathway is secondary metabolite metabolism; methylglyoxal degradation; (R)-lactate from methylglyoxal: step 2/2. Functionally, thiolesterase that catalyzes the hydrolysis of S-D-lactoyl-glutathione to form glutathione and D-lactic acid. In Mannheimia succiniciproducens (strain KCTC 0769BP / MBEL55E), this protein is Hydroxyacylglutathione hydrolase.